Reading from the N-terminus, the 967-residue chain is Translation initiation factor IF-2 (967 aa).

The interval 34–363 is disordered; that stretch reads ASSTVEPPVA…APAVGGVSVP (330 aa). 2 stretches are compositionally biased toward low complexity: residues 51 to 96 and 103 to 154; these read PAGG…GNAA and ASEA…TPGP. Residues 184–196 show a composition bias toward gly residues; it reads RSEGGAQRGGPRP. Residues 197-206 show a composition bias toward low complexity; the sequence is GGQQRSGKPG. Gly residues predominate over residues 300–333; that stretch reads PRRGGGPGGGPGGGGGFRGRGGRGGTQGAFGRGG. Over residues 334–345 the composition is skewed to basic residues; it reads ARGKHRKSKRAK. One can recognise a tr-type G domain in the interval 460 to 632; it reads PRPPVVTVMG…IVLTADGALE (173 aa). Residues 469–476 form a G1 region; that stretch reads GHVDHGKT. 469–476 serves as a coordination point for GTP; it reads GHVDHGKT. Positions 494-498 are G2; that stretch reads GITQH. Residues 519-522 form a G3 region; the sequence is DTPG. Residues 519–523 and 573–576 each bind GTP; these read DTPGH and NKVD. Residues 573 to 576 are G4; it reads NKVD. The segment at 609–611 is G5; sequence SAR.

This sequence belongs to the TRAFAC class translation factor GTPase superfamily. Classic translation factor GTPase family. IF-2 subfamily.

The protein localises to the cytoplasm. Its function is as follows. One of the essential components for the initiation of protein synthesis. Protects formylmethionyl-tRNA from spontaneous hydrolysis and promotes its binding to the 30S ribosomal subunits. Also involved in the hydrolysis of GTP during the formation of the 70S ribosomal complex. The chain is Translation initiation factor IF-2 from Kocuria rhizophila (strain ATCC 9341 / DSM 348 / NBRC 103217 / DC2201).